A 159-amino-acid polypeptide reads, in one-letter code: SsrA-binding protein (159 aa).

Residues 137–147 (LAERQANRETE) are compositionally biased toward basic and acidic residues. A disordered region spans residues 137–159 (LAERQANRETEQAVGRRLKGMHD).

The protein belongs to the SmpB family.

It localises to the cytoplasm. Required for rescue of stalled ribosomes mediated by trans-translation. Binds to transfer-messenger RNA (tmRNA), required for stable association of tmRNA with ribosomes. tmRNA and SmpB together mimic tRNA shape, replacing the anticodon stem-loop with SmpB. tmRNA is encoded by the ssrA gene; the 2 termini fold to resemble tRNA(Ala) and it encodes a 'tag peptide', a short internal open reading frame. During trans-translation Ala-aminoacylated tmRNA acts like a tRNA, entering the A-site of stalled ribosomes, displacing the stalled mRNA. The ribosome then switches to translate the ORF on the tmRNA; the nascent peptide is terminated with the 'tag peptide' encoded by the tmRNA and targeted for degradation. The ribosome is freed to recommence translation, which seems to be the essential function of trans-translation. This Nocardioides sp. (strain ATCC BAA-499 / JS614) protein is SsrA-binding protein.